Reading from the N-terminus, the 443-residue chain is Chromosome partition protein MukF (443 aa).

A leucine-zipper region spans residues 209-237 (LDETSGNLRELQDTLNAAGDKLQAQLLRI).

It belongs to the MukF family. In terms of assembly, interacts, and probably forms a ternary complex, with MukE and MukB via its C-terminal region. The complex formation is stimulated by calcium or magnesium. It is required for an interaction between MukE and MukB.

The protein resides in the cytoplasm. Its subcellular location is the nucleoid. Involved in chromosome condensation, segregation and cell cycle progression. May participate in facilitating chromosome segregation by condensation DNA from both sides of a centrally located replisome during cell division. Not required for mini-F plasmid partitioning. Probably acts via its interaction with MukB and MukE. Overexpression results in anucleate cells. It has a calcium binding activity. The chain is Chromosome partition protein MukF from Actinobacillus pleuropneumoniae serotype 3 (strain JL03).